Reading from the N-terminus, the 154-residue chain is Small ribosomal subunit protein bS18 (154 aa).

The segment at 1–82 (MEKKTTKKAT…PFAKYNRGYP (82 aa)) is disordered. Positions 8–19 (KATASKTTTTKK) are enriched in low complexity. Basic and acidic residues predominate over residues 20-32 (AAAEKTEIKETKK). Residues 33–49 (TTTTKTSTAKKATTASV) show a composition bias toward low complexity. Over residues 50–69 (EKTEVKETKKSSDNKKEFNP) the composition is skewed to basic and acidic residues.

This sequence belongs to the bacterial ribosomal protein bS18 family. Part of the 30S ribosomal subunit. Forms a tight heterodimer with protein bS6.

Binds as a heterodimer with protein bS6 to the central domain of the 16S rRNA, where it helps stabilize the platform of the 30S subunit. The polypeptide is Small ribosomal subunit protein bS18 (Malacoplasma penetrans (strain HF-2) (Mycoplasma penetrans)).